Here is a 55-residue protein sequence, read N- to C-terminus: MAKDKDVRPIIKLKSTAGTGFTYVTRKNRRNNPDRLVMKKYDPVVRKHVDFREER.

Belongs to the bacterial ribosomal protein bL33 family.

In Kocuria rhizophila (strain ATCC 9341 / DSM 348 / NBRC 103217 / DC2201), this protein is Large ribosomal subunit protein bL33.